Here is a 787-residue protein sequence, read N- to C-terminus: Phenylalanine--tRNA ligase beta subunit (787 aa).

The tRNA-binding domain maps to 39 to 149 (APAFAGVVIA…EDAPVGTNIR (111 aa)). In terms of domain architecture, B5 spans 400–475 (PEVKQVGLRL…RVYGYENIPD (76 aa)). Asp-453, Asp-459, Glu-462, and Glu-463 together coordinate Mg(2+). In terms of domain architecture, FDX-ACB spans 694 to 786 (SKFQPVRRDL…AATAAGARLR (93 aa)).

Belongs to the phenylalanyl-tRNA synthetase beta subunit family. Type 1 subfamily. In terms of assembly, tetramer of two alpha and two beta subunits. Mg(2+) is required as a cofactor.

Its subcellular location is the cytoplasm. It catalyses the reaction tRNA(Phe) + L-phenylalanine + ATP = L-phenylalanyl-tRNA(Phe) + AMP + diphosphate + H(+). This chain is Phenylalanine--tRNA ligase beta subunit (pheT), found in Neisseria meningitidis serogroup A / serotype 4A (strain DSM 15465 / Z2491).